Here is a 211-residue protein sequence, read N- to C-terminus: Large ribosomal subunit protein uL3 (211 aa).

The tract at residues 125-148 (GPASHGSKKWHRRPGSIGQRKTPG) is disordered.

Belongs to the universal ribosomal protein uL3 family. In terms of assembly, part of the 50S ribosomal subunit. Forms a cluster with proteins L14 and L19. Also contacts proteins L13 and L17.

Its function is as follows. One of the primary rRNA binding proteins, it binds directly near the 3'-end of the 23S rRNA, where it nucleates assembly of the 50S subunit. The sequence is that of Large ribosomal subunit protein uL3 (rplC) from Deinococcus radiodurans (strain ATCC 13939 / DSM 20539 / JCM 16871 / CCUG 27074 / LMG 4051 / NBRC 15346 / NCIMB 9279 / VKM B-1422 / R1).